The chain runs to 1443 residues: Lysophospholipase NTE1 (1443 aa).

The Lumenal portion of the chain corresponds to 1–59 (MEEELAIEDLPRLTGTVSLNNGLLHSIYNETTVFKILRWSLVEIPKYILKLMSKNLEIN). A helical transmembrane segment spans residues 60–80 (LNVSSILIITLLIAAGILVIV). Residues 81-1443 (RYKFLTGYSE…RIKMYRRNTM (1363 aa)) are Cytoplasmic-facing. Over residues 103–118 (ALGQQSTNYPKSTSSG) the composition is skewed to polar residues. 2 disordered regions span residues 103-122 (ALGQQSTNYPKSTSSGLFVE) and 199-251 (KYDE…GKMH). Residues 210-235 (EGEEADEDDEEEEKEVGDDGDDEMDV) are compositionally biased toward acidic residues. A nucleoside 3',5'-cyclic phosphate is bound by residues 619 to 750 (LYKR…LKSL) and 746 to 871 (KLKS…VASK). The PNPLA domain maps to 1136–1300 (LVLGGGGSRG…LDNLPVMEMK (165 aa)). The short motif at 1140–1145 (GGGSRG) is the GXGXXG element. The GXSXG motif lies at 1167–1171 (GTSIG). Ser-1169 serves as the catalytic Nucleophile. Asp-1287 functions as the Proton acceptor in the catalytic mechanism. Positions 1287 to 1289 (DGG) match the DGA/G motif.

Belongs to the NTE family.

The protein resides in the endoplasmic reticulum membrane. The catalysed reaction is a 1-acyl-sn-glycero-3-phosphocholine + H2O = sn-glycerol 3-phosphocholine + a fatty acid + H(+). With respect to regulation, inhibited by organophosphorus esters. Its function is as follows. Intracellular phospholipase B that catalyzes the double deacylation of phosphatidylcholine (PC) to glycerophosphocholine (GroPCho). Plays an important role in membrane lipid homeostasis. Responsible for the rapid PC turnover in response to inositol, elevated temperatures, or when choline is present in the growth medium. This chain is Lysophospholipase NTE1 (NTE1), found in Lodderomyces elongisporus (strain ATCC 11503 / CBS 2605 / JCM 1781 / NBRC 1676 / NRRL YB-4239) (Yeast).